A 242-amino-acid chain; its full sequence is Probable transcriptional regulatory protein mhp472 (242 aa).

The protein belongs to the TACO1 family.

It localises to the cytoplasm. This Mesomycoplasma hyopneumoniae (strain 232) (Mycoplasma hyopneumoniae) protein is Probable transcriptional regulatory protein mhp472.